Consider the following 172-residue polypeptide: Achaete-scute homolog 4 (172 aa).

Residues 72-124 enclose the bHLH domain; that stretch reads AFLRKRNERERQRVRCVNEGYARLRDHLPRELADKRLSKVETLRAAIDYIKHL. The segment at 144–172 is disordered; the sequence is QRRAECNSDGESKASSAPSPSSEPEEGGS. The segment covering 145–155 has biased composition (basic and acidic residues); it reads RRAECNSDGES. The span at 156-165 shows a compositional bias: low complexity; the sequence is KASSAPSPSS.

As to expression, expressed in skin. 7-fold higher expression in fetal skin than in adult skin. Weak expression also detected in fetal lung, aorta and brain, and in adult stomach, kidney, ovary and breast.

It localises to the nucleus. In terms of biological role, could be a transcriptional regulator involved in skin development. In Homo sapiens (Human), this protein is Achaete-scute homolog 4 (ASCL4).